The following is a 678-amino-acid chain: DNA ligase (678 aa).

NAD(+) is bound by residues 34-38 (DSEYD), 83-84 (SL), and E114. K116 functions as the N6-AMP-lysine intermediate in the catalytic mechanism. Residues R137, E176, K293, and K317 each contribute to the NAD(+) site. C411, C414, C429, and C435 together coordinate Zn(2+). A BRCT domain is found at 594–678 (PTRQPLNGES…LMAGYGQTLS (85 aa)).

It belongs to the NAD-dependent DNA ligase family. LigA subfamily. It depends on Mg(2+) as a cofactor. The cofactor is Mn(2+).

It carries out the reaction NAD(+) + (deoxyribonucleotide)n-3'-hydroxyl + 5'-phospho-(deoxyribonucleotide)m = (deoxyribonucleotide)n+m + AMP + beta-nicotinamide D-nucleotide.. DNA ligase that catalyzes the formation of phosphodiester linkages between 5'-phosphoryl and 3'-hydroxyl groups in double-stranded DNA using NAD as a coenzyme and as the energy source for the reaction. It is essential for DNA replication and repair of damaged DNA. This chain is DNA ligase, found in Acinetobacter baumannii (strain AB307-0294).